A 420-amino-acid polypeptide reads, in one-letter code: Signal recognition particle receptor FtsY (420 aa).

Basic and acidic residues predominate over residues 28–62; it reads DLDRAMGKVAPDNKKTRDAKAAADARLAAEAEEAK. Positions 28–118 are disordered; the sequence is DLDRAMGKVA…PETPESVGSR (91 aa). The span at 63 to 104 shows a compositional bias: low complexity; it reads AATAAEPAKSAESAKAEPAPAAQAEPEPAAAPKPESQPASKP. Residues 227–234, 310–314, and 372–375 contribute to the GTP site; these read GVNGTGKT, DTAGR, and SKLD.

This sequence belongs to the GTP-binding SRP family. FtsY subfamily. As to quaternary structure, part of the signal recognition particle protein translocation system, which is composed of SRP and FtsY.

It localises to the cell membrane. It is found in the cytoplasm. The catalysed reaction is GTP + H2O = GDP + phosphate + H(+). Involved in targeting and insertion of nascent membrane proteins into the cytoplasmic membrane. Acts as a receptor for the complex formed by the signal recognition particle (SRP) and the ribosome-nascent chain (RNC). The chain is Signal recognition particle receptor FtsY from Bifidobacterium longum (strain NCC 2705).